A 282-amino-acid chain; its full sequence is tRNA pseudouridine synthase B (282 aa).

Aspartate 39 acts as the Nucleophile in catalysis.

The protein belongs to the pseudouridine synthase TruB family. Type 1 subfamily.

It catalyses the reaction uridine(55) in tRNA = pseudouridine(55) in tRNA. Functionally, responsible for synthesis of pseudouridine from uracil-55 in the psi GC loop of transfer RNAs. The chain is tRNA pseudouridine synthase B from Borreliella afzelii (strain PKo) (Borrelia afzelii).